A 653-amino-acid chain; its full sequence is Zinc finger CCCH domain-containing protein 54 (653 aa).

The tract at residues 242-261 (NGGGGGGGSPARARRSNGLS) is disordered. The C3H1-type zinc finger occupies 260–287 (LSTRRPCHYFSKGICKNGQNCHYSHHQV). The HTH OST-type domain occupies 313-396 (SLETLEMEIT…GQHSVVLAED (84 aa)). Residues 422–497 (HQIYLTFPAE…SRVLVKPYRE (76 aa)) enclose the RRM domain. Residues 537 to 565 (RLMRKQLAEKREMLLEMERRRATVRRLES) adopt a coiled-coil conformation. The tract at residues 598 to 623 (PSLASPDPLEIVSNSQAPPTQAGNIY) is disordered. Residues 609–620 (VSNSQAPPTQAG) are compositionally biased toward polar residues.

This chain is Zinc finger CCCH domain-containing protein 54, found in Oryza sativa subsp. japonica (Rice).